Reading from the N-terminus, the 1022-residue chain is ATPase MORC2B (1022 aa).

Ala2 carries the N-acetylalanine modification. Residues Asn39, 87–89, and 99–105 contribute to the ATP site; these read SAK and RYGNGLK. Asn39 contacts Mg(2+). A coiled-coil region spans residues 285 to 362; that stretch reads KTRAEQEVKK…RDAKQQALKE (78 aa). Lys427 contributes to the ATP binding site. A CW-type zinc finger spans residues 490 to 544; sequence AMQVPTTIQCDLCLKWRTLPFQLSAVEEGYPINWVCSMNPDPEQDQCEAFELKQK. Positions 499, 502, 525, and 536 each coordinate Zn(2+). Residues 555–583 are a coiled coil; it reads KTQEERQKQLTEKIQQEQRKLKALKKIKP. Phosphoserine is present on Ser615. Residue Lys649 forms a Glycyl lysine isopeptide (Lys-Gly) (interchain with G-Cter in SUMO2) linkage. Phosphoserine is present on residues Ser690, Ser724, Ser733, and Ser737. Lys758 participates in a covalent cross-link: Glycyl lysine isopeptide (Lys-Gly) (interchain with G-Cter in SUMO2). Residues Ser768 and Ser770 each carry the phosphoserine modification. Residue Thr827 is modified to Phosphothreonine. A phosphoserine mark is found at Ser846 and Ser851. A Glycyl lysine isopeptide (Lys-Gly) (interchain with G-Cter in SUMO2) cross-link involves residue Lys922. A coiled-coil region spans residues 962 to 1001; sequence QAKVSEESLRISQKKLQETEEKLQKLRTNIQTLLQMAQQG.

In terms of assembly, interacts with Morc2a. Protein is abundant in testes but not detected in other adult tissues examined (at protein level). Detected in germ cells with a distinct developmental-specific expression pattern but not in somatic cells such as Sertoli cells.

It is found in the nucleus. The enzyme catalyses ATP + H2O = ADP + phosphate + H(+). Required for chromosomal synapsis and meiotic recombination in males and females. This Mus musculus (Mouse) protein is ATPase MORC2B.